We begin with the raw amino-acid sequence, 457 residues long: ATP synthase subunit beta (457 aa).

147–154 serves as a coordination point for ATP; it reads GGAGVGKT.

The protein belongs to the ATPase alpha/beta chains family. In terms of assembly, F-type ATPases have 2 components, CF(1) - the catalytic core - and CF(0) - the membrane proton channel. CF(1) has five subunits: alpha(3), beta(3), gamma(1), delta(1), epsilon(1). CF(0) has three main subunits: a(1), b(2) and c(9-12). The alpha and beta chains form an alternating ring which encloses part of the gamma chain. CF(1) is attached to CF(0) by a central stalk formed by the gamma and epsilon chains, while a peripheral stalk is formed by the delta and b chains.

It is found in the cell inner membrane. It catalyses the reaction ATP + H2O + 4 H(+)(in) = ADP + phosphate + 5 H(+)(out). Produces ATP from ADP in the presence of a proton gradient across the membrane. The catalytic sites are hosted primarily by the beta subunits. The chain is ATP synthase subunit beta from Haemophilus influenzae (strain 86-028NP).